A 665-amino-acid polypeptide reads, in one-letter code: Phosphatidylinositol-3-phosphate phosphatase MTMR1 (665 aa).

Residue Met1 is modified to N-acetylmethionine. The segment covering Met1 to Gly11 has biased composition (low complexity). The segment at Met1–Thr51 is disordered. Residues Cys12 to Gly24 are compositionally biased toward gly residues. Residues Ser39 to Thr51 are compositionally biased toward polar residues. 2 positions are modified to phosphoserine: Ser43 and Ser49. The GRAM domain maps to Asn90–Gly161. The Myotubularin phosphatase domain occupies Gly226–Tyr601. A 1,2-diacyl-sn-glycero-3-phospho-(1D-myo-inositol-3-phosphate) contacts are provided by Asn351, Asn376, and Ile377. Residue Cys438 is the Phosphocysteine intermediate of the active site. A 1,2-diacyl-sn-glycero-3-phospho-(1D-myo-inositol-3-phosphate) is bound by residues Ser439, Asp440, Gly441, Trp442, Asp443, Arg444, and Arg484. Ser439 is a phosphate binding site. Residues Gly441, Trp442, Asp443, and Arg444 each contribute to the phosphate site. Residues Met608–Val665 are required for dimerization. A disordered region spans residues Arg642 to Val665. A compositionally biased stretch (low complexity) spans Ser645–Ser657.

The protein belongs to the protein-tyrosine phosphatase family. Non-receptor class myotubularin subfamily. In terms of assembly, homodimer.

It localises to the cell membrane. It is found in the cytoplasm. The catalysed reaction is a 1,2-diacyl-sn-glycero-3-phospho-(1D-myo-inositol-3-phosphate) + H2O = a 1,2-diacyl-sn-glycero-3-phospho-(1D-myo-inositol) + phosphate. It carries out the reaction 1,2-dioctanoyl-sn-glycero-3-phospho-(1-D-myo-inositol-3-phosphate) + H2O = 1,2-dioctanoyl-sn-glycero-3-phospho-(1D-myo-inositol) + phosphate. It catalyses the reaction a 1,2-diacyl-sn-glycero-3-phospho-(1D-myo-inositol-3,5-bisphosphate) + H2O = a 1,2-diacyl-sn-glycero-3-phospho-(1D-myo-inositol-5-phosphate) + phosphate. Lipid phosphatase that specifically dephosphorylates the D-3 position of phosphatidylinositol 3-phosphate, generating phosphatidylinositol. Could also dephosphorylate phosphatidylinositol 3,5-bisphosphate to produce phosphatidylinositol 5-phosphate. The protein is Phosphatidylinositol-3-phosphate phosphatase MTMR1 of Homo sapiens (Human).